The chain runs to 387 residues: Phosphoglycerate kinase (387 aa).

Substrate is bound by residues Asp21–Asn23, Arg36, His59–Arg62, Arg113, and Arg146. Residues Lys197, Glu314, and Gly340–Thr343 each bind ATP.

Belongs to the phosphoglycerate kinase family. Monomer.

It localises to the cytoplasm. The catalysed reaction is (2R)-3-phosphoglycerate + ATP = (2R)-3-phospho-glyceroyl phosphate + ADP. The protein operates within carbohydrate degradation; glycolysis; pyruvate from D-glyceraldehyde 3-phosphate: step 2/5. The polypeptide is Phosphoglycerate kinase (Aeromonas salmonicida (strain A449)).